The chain runs to 404 residues: Argininosuccinate synthase (404 aa).

ATP contacts are provided by residues 12 to 20 and Ala-40; that span reads AYSGGLDTS. 2 residues coordinate L-citrulline: Tyr-92 and Ser-97. Position 122 (Gly-122) interacts with ATP. L-aspartate-binding residues include Thr-124, Asn-128, and Asp-129. Residue Asn-128 coordinates L-citrulline. Positions 132, 181, 190, 266, and 278 each coordinate L-citrulline.

It belongs to the argininosuccinate synthase family. Type 1 subfamily. Homotetramer.

The protein resides in the cytoplasm. The catalysed reaction is L-citrulline + L-aspartate + ATP = 2-(N(omega)-L-arginino)succinate + AMP + diphosphate + H(+). It participates in amino-acid biosynthesis; L-arginine biosynthesis; L-arginine from L-ornithine and carbamoyl phosphate: step 2/3. The protein is Argininosuccinate synthase of Photorhabdus laumondii subsp. laumondii (strain DSM 15139 / CIP 105565 / TT01) (Photorhabdus luminescens subsp. laumondii).